Consider the following 285-residue polypeptide: Putative cytochrome c peroxidase, mitochondrial (285 aa).

His-37 (proton acceptor) is an active-site residue. Position 161 (His-161) interacts with heme b. Trp-177 acts as the Tryptophan radical intermediate in catalysis.

The protein belongs to the peroxidase family. Cytochrome c peroxidase subfamily. In terms of assembly, forms a one-to-one complex with cytochrome c. The cofactor is heme b.

It localises to the mitochondrion matrix. It is found in the mitochondrion intermembrane space. The catalysed reaction is 2 Fe(II)-[cytochrome c] + H2O2 + 2 H(+) = 2 Fe(III)-[cytochrome c] + 2 H2O. Destroys radicals which are normally produced within the cells and which are toxic to biological systems. This Yarrowia lipolytica (strain CLIB 122 / E 150) (Yeast) protein is Putative cytochrome c peroxidase, mitochondrial.